We begin with the raw amino-acid sequence, 336 residues long: Nuclear envelope-associated protein 3 (336 aa).

2 coiled-coil regions span residues 14–87 (LKDL…IRAS) and 128–261 (VLSK…LKKK). The Bipartite nuclear localization signal motif lies at 240 to 261 (KTKELEDQVENQRRIDQELKKK). Residues 313-330 (LWDKSGFKIVVSMSMLIL) traverse the membrane as a helical segment.

As to quaternary structure, forms homomers and heteromers with NEAP1 and NEAP2. Interacts with SUN1 and SUN2.

It is found in the nucleus inner membrane. The protein resides in the nucleus. Its subcellular location is the nucleoplasm. The chain is Nuclear envelope-associated protein 3 from Arabidopsis thaliana (Mouse-ear cress).